Reading from the N-terminus, the 127-residue chain is Fatty acid-binding protein, liver (127 aa).

M1 bears the N-acetylmethionine mark. Phosphoserine is present on S11. Residues K31 and K36 each carry the N6-succinyllysine modification. A Phosphoserine modification is found at S39. At K46 the chain carries N6-succinyllysine. T51 carries the post-translational modification Phosphothreonine. An N6-succinyllysine mark is found at K57 and K78. Position 84 is an N6-acetyllysine; alternate (K84). K84 is subject to N6-succinyllysine; alternate. K90 is subject to N6-succinyllysine. S100 bears the Phosphoserine mark. N6-succinyllysine is present on K121.

The protein belongs to the calycin superfamily. Fatty-acid binding protein (FABP) family.

The protein resides in the cytoplasm. In terms of biological role, plays a role in lipoprotein-mediated cholesterol uptake in hepatocytes. Binds cholesterol. Binds free fatty acids and their coenzyme A derivatives, bilirubin, and some other small molecules in the cytoplasm. May be involved in intracellular lipid transport. The polypeptide is Fatty acid-binding protein, liver (Fabp1) (Mus musculus (Mouse)).